The following is a 265-amino-acid chain: Acrosomal protein SP-10 (265 aa).

A signal peptide spans 1–21 (MNRFLLLMSLYLLGSARGTSS). The segment at 62–181 (LNTLSEHGSS…EQASGAPISS (120 aa)) is disordered. 16 consecutive repeat copies span residues 66–70 (SEHGS), 71–75 (SEHGS), 85–88 (SGEH), 91–95 (SEHAS), 110–114 (VGEQP), 115–119 (SGEQP), 120–123 (SGEH), 125–129 (SGEQP), 135–139 (SGEQP), 140–144 (SDEQP), 145–148 (SGEH), 150–154 (SGEQP), 155–159 (SGEQA), 160–164 (SGEQP), 165–168 (SGEH), and 170–174 (SGEQA). Residues 66–95 (SEHGSSEHGSSKHTVAEHTSGEHAESEHAS) form a 3 X 5 AA repeats of S-E-H-[GA]-S region. Positions 69 to 110 (GSSEHGSSKHTVAEHTSGEHAESEHASGEPAATEHAEGEHTV) are enriched in basic and acidic residues. The tract at residues 85-168 (SGEHAESEHA…ASGEQPSGEH (84 aa)) is 4 X 4 AA repeats of S-G-E-H. Residues 110–174 (VGEQPSGEQP…SGEHASGEQA (65 aa)) form a 9 X 5 AA repeats of [SV]-G-E-Q-[PSA] region. The segment covering 152 to 163 (EQPSGEQASGEQ) has biased composition (polar residues). Asn-258 carries N-linked (GlcNAc...) asparagine glycosylation.

Testis.

It is found in the cytoplasmic vesicle. Its subcellular location is the secretory vesicle. It localises to the acrosome. This is Acrosomal protein SP-10 (ACRV1) from Homo sapiens (Human).